A 132-amino-acid chain; its full sequence is Large ribosomal subunit protein bL12 (132 aa).

The protein belongs to the bacterial ribosomal protein bL12 family. In terms of assembly, homodimer. Part of the ribosomal stalk of the 50S ribosomal subunit. Forms a multimeric L10(L12)X complex, where L10 forms an elongated spine to which 2 to 4 L12 dimers bind in a sequential fashion. Binds GTP-bound translation factors.

Forms part of the ribosomal stalk which helps the ribosome interact with GTP-bound translation factors. Is thus essential for accurate translation. The sequence is that of Large ribosomal subunit protein bL12 from Prochlorococcus marinus (strain MIT 9211).